Consider the following 74-residue polypeptide: Acyl carrier protein (74 aa).

The 73-residue stretch at 1–73 folds into the Carrier domain; it reads MAVFEKVQEI…DLVAYVEEKS (73 aa). Ser35 is subject to O-(pantetheine 4'-phosphoryl)serine.

This sequence belongs to the acyl carrier protein (ACP) family. In terms of processing, 4'-phosphopantetheine is transferred from CoA to a specific serine of apo-ACP by AcpS. This modification is essential for activity because fatty acids are bound in thioester linkage to the sulfhydryl of the prosthetic group.

It localises to the cytoplasm. Its pathway is lipid metabolism; fatty acid biosynthesis. Functionally, carrier of the growing fatty acid chain in fatty acid biosynthesis. In Streptococcus pyogenes serotype M1, this protein is Acyl carrier protein.